Reading from the N-terminus, the 441-residue chain is Ribosomal protein uS12 methylthiotransferase RimO (441 aa).

The MTTase N-terminal domain maps to proline 8 to proline 118. Residues cysteine 17, cysteine 53, cysteine 82, cysteine 150, cysteine 154, and cysteine 157 each contribute to the [4Fe-4S] cluster site. Residues leucine 136–glutamate 373 enclose the Radical SAM core domain. The TRAM domain maps to glutamine 376–valine 441.

The protein belongs to the methylthiotransferase family. RimO subfamily. [4Fe-4S] cluster is required as a cofactor.

The protein resides in the cytoplasm. It carries out the reaction L-aspartate(89)-[ribosomal protein uS12]-hydrogen + (sulfur carrier)-SH + AH2 + 2 S-adenosyl-L-methionine = 3-methylsulfanyl-L-aspartate(89)-[ribosomal protein uS12]-hydrogen + (sulfur carrier)-H + 5'-deoxyadenosine + L-methionine + A + S-adenosyl-L-homocysteine + 2 H(+). Functionally, catalyzes the methylthiolation of an aspartic acid residue of ribosomal protein uS12. This Escherichia coli (strain UTI89 / UPEC) protein is Ribosomal protein uS12 methylthiotransferase RimO.